The chain runs to 302 residues: Forkhead box protein R2 (302 aa).

Residues 183-285 constitute a DNA-binding region (fork-head); that stretch reads RPPLNYSHLV…RVLAYARRES (103 aa).

It is found in the nucleus. This chain is Forkhead box protein R2 (Foxr2), found in Mus musculus (Mouse).